Reading from the N-terminus, the 254-residue chain is MNRRRRIYEGKAKILYEGPEPGTLIQFFKDDATAFNKKKHEVIDGKGVLNNRICEYVFTHLNKIGIPTHFIRRLNMREQLIKEVEMIPLEIVVRNVAAGSLSKRLGIEEGVVLPRSIIEFYYKSDELEDPMVSEEHITAFGWANPAELDDIMALAIRVNDFLSGLFLGVGIQLVDFKIECGRLFEGDMMRIILADEISPDSCRLWDIETQKKMDKDLFRRDLGGLVEAYSEVARRLGIINENEPIRGTGPVLVK.

It belongs to the SAICAR synthetase family.

It catalyses the reaction 5-amino-1-(5-phospho-D-ribosyl)imidazole-4-carboxylate + L-aspartate + ATP = (2S)-2-[5-amino-1-(5-phospho-beta-D-ribosyl)imidazole-4-carboxamido]succinate + ADP + phosphate + 2 H(+). It participates in purine metabolism; IMP biosynthesis via de novo pathway; 5-amino-1-(5-phospho-D-ribosyl)imidazole-4-carboxamide from 5-amino-1-(5-phospho-D-ribosyl)imidazole-4-carboxylate: step 1/2. This Agrobacterium fabrum (strain C58 / ATCC 33970) (Agrobacterium tumefaciens (strain C58)) protein is Phosphoribosylaminoimidazole-succinocarboxamide synthase 1 (purC1).